The sequence spans 92 residues: Small ribosomal subunit protein uS19 (92 aa).

It belongs to the universal ribosomal protein uS19 family.

Functionally, protein S19 forms a complex with S13 that binds strongly to the 16S ribosomal RNA. The chain is Small ribosomal subunit protein uS19 from Methylobacterium sp. (strain 4-46).